A 440-amino-acid chain; its full sequence is UDP-glucose 6-dehydrogenase YwqF (440 aa).

NAD(+) contacts are provided by residues 2-19, Val11, Asp30, Lys35, Thr121, and Glu155; that span reads NITVIGTGYVGLVTGVSL. Substrate contacts are provided by residues 151-155, Lys204, Asn208, 249-253, and Gly257; these read EFLRE and FLKAG. Cys260 acts as the Nucleophile in catalysis. NAD(+) is bound at residue Lys263. Lys320 contacts substrate. Arg327 lines the NAD(+) pocket.

Belongs to the UDP-glucose/GDP-mannose dehydrogenase family. In terms of processing, phosphorylated on tyrosine residue(s). Phosphorylated by YwqD and dephosphorylated by YwqE in vitro.

Its subcellular location is the cytoplasm. It carries out the reaction UDP-alpha-D-glucose + 2 NAD(+) + H2O = UDP-alpha-D-glucuronate + 2 NADH + 3 H(+). Its pathway is nucleotide-sugar biosynthesis; UDP-alpha-D-glucuronate biosynthesis; UDP-alpha-D-glucuronate from UDP-alpha-D-glucose: step 1/1. Its activity is regulated as follows. Competitively inhibited by UDP-glucose. Activated by phosphorylation, which may increase affinity for NAD(+); inhibited by dephosphorylation. In terms of biological role, catalyzes the conversion of UDP-glucose into UDP-glucuronate, one of the precursors of teichuronic acid. The protein is UDP-glucose 6-dehydrogenase YwqF (ywqF) of Bacillus subtilis (strain 168).